We begin with the raw amino-acid sequence, 185 residues long: Elongation factor P (185 aa).

Belongs to the elongation factor P family.

It localises to the cytoplasm. Its pathway is protein biosynthesis; polypeptide chain elongation. Its function is as follows. Involved in peptide bond synthesis. Stimulates efficient translation and peptide-bond synthesis on native or reconstituted 70S ribosomes in vitro. Probably functions indirectly by altering the affinity of the ribosome for aminoacyl-tRNA, thus increasing their reactivity as acceptors for peptidyl transferase. This chain is Elongation factor P, found in Kosmotoga olearia (strain ATCC BAA-1733 / DSM 21960 / TBF 19.5.1).